A 249-amino-acid polypeptide reads, in one-letter code: Ribonuclease 3 (249 aa).

An RNase III domain is found at 20 to 149 (FKEFQERISV…FIGALYLDQG (130 aa)). Glu-62 contacts Mg(2+). Residue Asp-66 is part of the active site. Asp-135 and Glu-138 together coordinate Mg(2+). Residue Glu-138 is part of the active site. The DRBM domain occupies 175–244 (DFKSQLQEFV…AQEALAKMQK (70 aa)). Residues 223-249 (NGRSKKEAEQHAAQEALAKMQKHHTKQ) form a disordered region.

It belongs to the ribonuclease III family. As to quaternary structure, homodimer. Mg(2+) serves as cofactor.

Its subcellular location is the cytoplasm. The catalysed reaction is Endonucleolytic cleavage to 5'-phosphomonoester.. Digests double-stranded RNA. Involved in the processing of primary rRNA transcript to yield the immediate precursors to the large and small rRNAs (23S and 16S). Processes some mRNAs, and tRNAs when they are encoded in the rRNA operon. Processes pre-crRNA and tracrRNA of type II CRISPR loci if present in the organism. The chain is Ribonuclease 3 from Bacillus velezensis (strain DSM 23117 / BGSC 10A6 / LMG 26770 / FZB42) (Bacillus amyloliquefaciens subsp. plantarum).